The following is a 283-amino-acid chain: MNWDDLRVVAAINRCGSFNRAAKMLNVEETTIARRLARLEGSLGCVLFQAVDGQRRPTEQCRALLQPLVLMEQAAEAITLQLERQERPLRNFRLTTIDAIAQHYLAPTLADLLIAEPELSLQLETSDDNVDMARWHADIAIRLGRPRRGNFTMRRVGEMRFNLVLPRGAAPEDLVLAAYPDPLMEVPEMQDFQQYFPGRQARLRSANLRVIRVLVDSGRAAAVLPDFLSVDLVGDERFQVHRLPARREIWLLAQPHLRDDPLARRVTNWCADLFAETLAGDAV.

The HTH lysR-type domain occupies 1 to 58; it reads MNWDDLRVVAAINRCGSFNRAAKMLNVEETTIARRLARLEGSLGCVLFQAVDGQRRPT. The segment at residues 18–37 is a DNA-binding region (H-T-H motif); that stretch reads FNRAAKMLNVEETTIARRLA.

This sequence belongs to the LysR transcriptional regulatory family.

Transcriptional activator of the mau genes involved in methylamine metabolism. This Paracoccus denitrificans protein is Mau operon transcriptional activator (mauR).